Reading from the N-terminus, the 183-residue chain is Ferritin heavy chain (183 aa).

Residue Met1 is modified to N-acetylmethionine. Residue Thr2 is modified to N-acetylthreonine; in Ferritin heavy chain, N-terminally processed. One can recognise a Ferritin-like diiron domain in the interval 11-160 (QNYHQDSEAA…DHVTNLRKMG (150 aa)). Fe cation is bound by residues Glu28, Glu63, His66, Glu108, and Gln142. 2 positions are modified to phosphoserine: Ser179 and Ser183.

This sequence belongs to the ferritin family. As to quaternary structure, oligomer of 24 subunits. There are two types of subunits: L (light) chain and H (heavy) chain. The major chain can be light or heavy, depending on the species and tissue type. In the human liver, the heavy chain is predominant. The functional molecule forms a roughly spherical shell with a diameter of 12 nm and contains a central cavity into which the insoluble mineral iron core is deposited. Interacts with NCOA4; NCOA4 promotes targeting of the iron-binding ferritin complex to autolysosomes following starvation or iron depletion. As to expression, expressed in the liver.

The protein localises to the cytoplasm. It is found in the lysosome. Its subcellular location is the cytoplasmic vesicle. The protein resides in the autophagosome. It catalyses the reaction 4 Fe(2+) + O2 + 4 H(+) = 4 Fe(3+) + 2 H2O. In terms of biological role, stores iron in a soluble, non-toxic, readily available form. Important for iron homeostasis. Has ferroxidase activity. Iron is taken up in the ferrous form and deposited as ferric hydroxides after oxidation. Also plays a role in delivery of iron to cells. Mediates iron uptake in capsule cells of the developing kidney. Delivery to lysosomes is mediated by the cargo receptor NCOA4 for autophagic degradation and release of iron. This is Ferritin heavy chain (FTH1) from Homo sapiens (Human).